The primary structure comprises 316 residues: D-alanine--D-alanine ligase (316 aa).

In terms of domain architecture, ATP-grasp spans 104 to 303; sequence KRVWLQHGLP…YADLCVAILA (200 aa). 130 to 185 provides a ligand contact to ATP; that stretch reads PDRLGLPLILKPPHEGSTVGITKVAGYSDMKAAYELAARFDAEVLAEQFITGRELT. Positions 257, 270, and 272 each coordinate Mg(2+).

The protein belongs to the D-alanine--D-alanine ligase family. Requires Mg(2+) as cofactor. Mn(2+) is required as a cofactor.

Its subcellular location is the cytoplasm. The enzyme catalyses 2 D-alanine + ATP = D-alanyl-D-alanine + ADP + phosphate + H(+). It functions in the pathway cell wall biogenesis; peptidoglycan biosynthesis. In terms of biological role, cell wall formation. The chain is D-alanine--D-alanine ligase from Bordetella bronchiseptica (strain ATCC BAA-588 / NCTC 13252 / RB50) (Alcaligenes bronchisepticus).